The following is a 138-amino-acid chain: Acidic phospholipase A2 1 (138 aa).

The N-terminal stretch at Met-1 to Gly-16 is a signal peptide. 7 cysteine pairs are disulfide-bonded: Cys-42–Cys-131, Cys-44–Cys-60, Cys-59–Cys-111, Cys-65–Cys-138, Cys-66–Cys-104, Cys-73–Cys-97, and Cys-91–Cys-102. Tyr-43, Gly-45, and Gly-47 together coordinate Ca(2+). Residue His-63 is part of the active site. Asp-64 serves as a coordination point for Ca(2+). Residue Asp-105 is part of the active site.

In terms of assembly, monomer. Ca(2+) serves as cofactor. As to expression, expressed by the venom gland.

The protein resides in the secreted. It catalyses the reaction a 1,2-diacyl-sn-glycero-3-phosphocholine + H2O = a 1-acyl-sn-glycero-3-phosphocholine + a fatty acid + H(+). In terms of biological role, snake venom phospholipase that inhibits ADP- and collagen-induced human platelet aggregation. This inhibition is completely inhibited by abolition of catalytic activity in case of collagen as inducer and partially inhibited in case of ADP as inducer. PLA2 catalyzes the calcium-dependent hydrolysis of the 2-acyl groups in 3-sn-phosphoglycerides. This chain is Acidic phospholipase A2 1, found in Macrovipera lebetinus (Levantine viper).